Here is a 785-residue protein sequence, read N- to C-terminus: Formin-like protein 3 (785 aa).

The N-terminal stretch at 1–20 (MGRLRLAFLAISLVVFVCVS) is a signal peptide. Positions 96 to 145 (YDWLAPASSPNEPPAETPDESSPSPSEETPSVVAPSQSVPGPPRPPPQRE) are disordered. Positions 115 to 134 (ESSPSPSEETPSVVAPSQSV) are enriched in low complexity. Residues 154–174 (LIIAVASTAVLTFVFVALMFL) traverse the membrane as a helical segment. Disordered regions lie at residues 184-228 (AVGS…KKRS), 241-329 (EFST…APKT), and 730-785 (ETTK…SSPS). Residues 201-223 (STGSTENSPTVASTSRKMFSVAS) show a composition bias toward polar residues. Over residues 256–303 (LKLPPGRSAPPPPPAAAPPPQPPPPPPPKPQPPPPPKIARPPPAPPKG) the composition is skewed to pro residues. An FH2 domain is found at 321 to 747 (DSETGAPKTK…SGKKESEMTT (427 aa)). Over residues 745–754 (MTTSDSNQPS) the composition is skewed to polar residues. Residues 773-785 (SDDSDDEEDSSPS) are compositionally biased toward acidic residues.

It belongs to the formin-like family. Class-I subfamily.

It is found in the membrane. Acts as actin nucleation factor that directs the formation of actin cables and polarized growth in pollen tubes. The chain is Formin-like protein 3 (FH3) from Arabidopsis thaliana (Mouse-ear cress).